We begin with the raw amino-acid sequence, 666 residues long: DNA mismatch repair protein MutL (666 aa).

This sequence belongs to the DNA mismatch repair MutL/HexB family.

In terms of biological role, this protein is involved in the repair of mismatches in DNA. It is required for dam-dependent methyl-directed DNA mismatch repair. May act as a 'molecular matchmaker', a protein that promotes the formation of a stable complex between two or more DNA-binding proteins in an ATP-dependent manner without itself being part of a final effector complex. This Clostridium botulinum (strain Okra / Type B1) protein is DNA mismatch repair protein MutL.